A 433-amino-acid chain; its full sequence is T-box transcription factor T (433 aa).

The segment at residues 49 to 217 (LWLRFKELTN…YNPFAKAFLD (169 aa)) is a DNA-binding region (T-box).

As to quaternary structure, monomer. Binds DNA as a monomer.

Its subcellular location is the nucleus. Functionally, involved in the transcriptional regulation of genes required for mesoderm formation and differentiation. Binds to a palindromic site (called T site) and activates gene transcription when bound to such a site. This chain is T-box transcription factor T, found in Gallus gallus (Chicken).